Consider the following 246-residue polypeptide: UDP-N-acetyl-D-mannosaminuronic acid transferase (246 aa).

The protein belongs to the glycosyltransferase 26 family.

The catalysed reaction is UDP-N-acetyl-alpha-D-mannosaminouronate + N-acetyl-alpha-D-glucosaminyl-di-trans,octa-cis-undecaprenyl diphosphate = beta-D-ManNAcA-(1-&gt;4)-alpha-D-GlcNAc-di-trans,octa-cis-undecaprenyl diphosphate + UDP + H(+). Its pathway is bacterial outer membrane biogenesis; enterobacterial common antigen biosynthesis. Catalyzes the synthesis of Und-PP-GlcNAc-ManNAcA (Lipid II), the second lipid-linked intermediate involved in enterobacterial common antigen (ECA) synthesis. The protein is UDP-N-acetyl-D-mannosaminuronic acid transferase of Salmonella arizonae (strain ATCC BAA-731 / CDC346-86 / RSK2980).